Reading from the N-terminus, the 363-residue chain is Aminomethyltransferase (363 aa).

The protein belongs to the GcvT family. As to quaternary structure, the glycine cleavage system is composed of four proteins: P, T, L and H.

The enzyme catalyses N(6)-[(R)-S(8)-aminomethyldihydrolipoyl]-L-lysyl-[protein] + (6S)-5,6,7,8-tetrahydrofolate = N(6)-[(R)-dihydrolipoyl]-L-lysyl-[protein] + (6R)-5,10-methylene-5,6,7,8-tetrahydrofolate + NH4(+). Functionally, the glycine cleavage system catalyzes the degradation of glycine. The chain is Aminomethyltransferase from Dechloromonas aromatica (strain RCB).